The following is a 1358-amino-acid chain: Xanthine dehydrogenase (1358 aa).

A 2Fe-2S ferredoxin-type domain is found at 18–107 (NQLLFFLNGE…GMAVTTIEGL (90 aa)). 8 residues coordinate [2Fe-2S] cluster: Cys-56, Cys-61, Cys-64, Cys-89, Cys-129, Cys-132, Cys-164, and Cys-166. The FAD-binding PCMH-type domain maps to 253–447 (FTGSRVTWYT…ESVFIPYTRP (195 aa)). FAD is bound by residues 281–288 (IVVGNTEI), Phe-366, 376–380 (SIGGN), Asp-389, Leu-437, and Lys-455. 2 residues coordinate Mo-molybdopterin: Gln-805 and Phe-836. Residues Glu-840 and Arg-918 each coordinate substrate. Arg-950 contributes to the Mo-molybdopterin binding site. Residues Tyr-952 and Thr-1048 each contribute to the substrate site. Ala-1117 provides a ligand contact to Mo-molybdopterin. The active-site Proton acceptor is Glu-1302.

Belongs to the xanthine dehydrogenase family. In terms of assembly, homodimer. Requires FAD as cofactor. The cofactor is Mo-molybdopterin. [2Fe-2S] cluster is required as a cofactor.

The protein localises to the peroxisome. The enzyme catalyses xanthine + NAD(+) + H2O = urate + NADH + H(+). It carries out the reaction hypoxanthine + NAD(+) + H2O = xanthine + NADH + H(+). In terms of biological role, key enzyme in purine degradation. Catalyzes the oxidation of hypoxanthine to xanthine. Catalyzes the oxidation of xanthine to uric acid. In Dictyostelium discoideum (Social amoeba), this protein is Xanthine dehydrogenase (xdh).